An 85-amino-acid chain; its full sequence is Alpha-insect toxin Bot14 (85 aa).

The N-terminal stretch at 1-18 is a signal peptide; the sequence is MSSLMISTAMKGKAPYRQ. The 65-residue stretch at 20–84 folds into the LCN-type CS-alpha/beta domain; sequence RDGYIAQPHN…GIIVHGEKCH (65 aa). 4 disulfide bridges follow: Cys-30–Cys-83, Cys-34–Cys-55, Cys-41–Cys-65, and Cys-45–Cys-67.

This sequence belongs to the long (4 C-C) scorpion toxin superfamily. Sodium channel inhibitor family. Alpha subfamily. As to expression, expressed by the venom gland.

The protein localises to the secreted. In terms of biological role, alpha toxins bind voltage-independently at site-3 of sodium channels (Nav) and inhibit the inactivation of the activated channels, thereby blocking neuronal transmission. This toxin is active only on insects. The sequence is that of Alpha-insect toxin Bot14 from Buthus occitanus tunetanus (Common European scorpion).